Here is a 215-residue protein sequence, read N- to C-terminus: Probable phosphoglycerate mutase GpmB (215 aa).

Substrate contacts are provided by residues 8-15 (RHGETQWN), 21-22 (QG), R58, K60, 82-85 (ELDM), 104-105 (RR), and 151-152 (GI). H9 serves as the catalytic Tele-phosphohistidine intermediate. Catalysis depends on E82, which acts as the Proton donor/acceptor.

This sequence belongs to the phosphoglycerate mutase family. GpmB subfamily.

It carries out the reaction (2R)-2-phosphoglycerate = (2R)-3-phosphoglycerate. Its pathway is carbohydrate degradation; glycolysis; pyruvate from D-glyceraldehyde 3-phosphate: step 3/5. The sequence is that of Probable phosphoglycerate mutase GpmB from Salmonella paratyphi C (strain RKS4594).